Consider the following 70-residue polypeptide: Small ribosomal subunit protein bS21B (70 aa).

Belongs to the bacterial ribosomal protein bS21 family.

This Rhizobium meliloti (strain 1021) (Ensifer meliloti) protein is Small ribosomal subunit protein bS21B (rpsU2).